We begin with the raw amino-acid sequence, 461 residues long: pre-mRNA splicing regulator USH1G (461 aa).

ANK repeat units lie at residues 31 to 60 (DGMT…DPDK), 64 to 93 (WGNT…NIWC), and 97 to 126 (DYHT…KQSS). Disordered regions lie at residues 208–243 (GTAR…SARS) and 332–368 (EDGG…DRSC). The segment covering 210–222 (ARGKTKMQKKLER) has biased composition (basic residues). The SAM domain occupies 385 to 447 (LEPETSPLET…KILGAVRRRR (63 aa)). Serine 422 bears the Phosphoserine; by CK2 mark.

As to quaternary structure, part of a complex composed of USH1C, USH1G and MYO7A. Interacts with USH1C (via the first PDZ domain). Interacts with PDZD7. Interacts with CDH23 and PCDH15; these interactions may recruit USH1G to the plasma membrane. Interacts with intraflagellar transport proteins IFT20, IFT52 and IFT57. Interacts with splicing factors SF3B1, PRPF6, PRPF31 and SON. Interacts with the U4/U6.U5 tri-small nuclear ribonucleoprotein (tri-snRNP) complex in the presence of pre-mRNAs. Interacts (via SAM domain) with MAGI2 (via PDZ 6 domain); the interaction is triggered by phosphorylation of USH1G by CK2 and negatively regulates MAGI2-mediated endocytosis. As to expression, expressed in vestibule of the inner ear, eye and small intestine.

Its subcellular location is the cytoplasm. It is found in the cytosol. The protein localises to the cytoskeleton. It localises to the cell membrane. The protein resides in the cell projection. Its subcellular location is the cilium. It is found in the nucleus speckle. The protein localises to the nucleus. It localises to the cajal body. The protein resides in the microtubule organizing center. Its subcellular location is the centrosome. It is found in the photoreceptor inner segment. Plays a role in pre-mRNA splicing by regulating the release and transfer of U4/U6.U5 tri-small nuclear ribonucleoprotein (tri-snRNP) complexes from their assembly site in Cajal bodies to nuclear speckles, thereby contributing to the assembly of the pre-catalytic spliceosome on target pre-mRNAs. May also participate in recycling of snRNPs back to Cajal bodies during splicing. Plays a role in regulating MAGI2-mediated endocytosis. Anchoring/scaffolding protein that is a part of the functional network formed by USH1C, USH1G, CDH23 and MYO7A that mediates mechanotransduction in cochlear hair cells. Required for normal development and maintenance of cochlear hair cell bundles. Required for normal hearing. This is pre-mRNA splicing regulator USH1G (USH1G) from Homo sapiens (Human).